The following is a 105-amino-acid chain: UPF0060 membrane protein Reut_B3679 (105 aa).

4 consecutive transmembrane segments (helical) span residues 4 to 24 (IALYLLTAVAEILGCYLPYLW), 28 to 48 (GASAWVLLPGALSLALFAWLL), 60 to 80 (AAYGGVYIGVAVLWLWLVDGV), and 82 to 102 (PSAWDLAGVGVAFGGMAIIVF).

Belongs to the UPF0060 family.

It is found in the cell inner membrane. The polypeptide is UPF0060 membrane protein Reut_B3679 (Cupriavidus pinatubonensis (strain JMP 134 / LMG 1197) (Cupriavidus necator (strain JMP 134))).